The primary structure comprises 272 residues: 2-succinyl-6-hydroxy-2,4-cyclohexadiene-1-carboxylate synthase (272 aa).

The protein belongs to the AB hydrolase superfamily. MenH family. Monomer.

It catalyses the reaction 5-enolpyruvoyl-6-hydroxy-2-succinyl-cyclohex-3-ene-1-carboxylate = (1R,6R)-6-hydroxy-2-succinyl-cyclohexa-2,4-diene-1-carboxylate + pyruvate. Its pathway is quinol/quinone metabolism; 1,4-dihydroxy-2-naphthoate biosynthesis; 1,4-dihydroxy-2-naphthoate from chorismate: step 3/7. It functions in the pathway quinol/quinone metabolism; menaquinone biosynthesis. Its function is as follows. Catalyzes a proton abstraction reaction that results in 2,5-elimination of pyruvate from 2-succinyl-5-enolpyruvyl-6-hydroxy-3-cyclohexene-1-carboxylate (SEPHCHC) and the formation of 2-succinyl-6-hydroxy-2,4-cyclohexadiene-1-carboxylate (SHCHC). This chain is 2-succinyl-6-hydroxy-2,4-cyclohexadiene-1-carboxylate synthase, found in Yersinia pseudotuberculosis serotype IB (strain PB1/+).